Reading from the N-terminus, the 134-residue chain is Transcription antitermination protein NusB (134 aa).

Belongs to the NusB family.

Functionally, involved in transcription antitermination. Required for transcription of ribosomal RNA (rRNA) genes. Binds specifically to the boxA antiterminator sequence of the ribosomal RNA (rrn) operons. This chain is Transcription antitermination protein NusB, found in Shewanella sediminis (strain HAW-EB3).